Here is a 103-residue protein sequence, read N- to C-terminus: Pyrimidine/purine nucleoside phosphorylase (103 aa).

The protein belongs to the nucleoside phosphorylase PpnP family.

The enzyme catalyses a purine D-ribonucleoside + phosphate = a purine nucleobase + alpha-D-ribose 1-phosphate. The catalysed reaction is adenosine + phosphate = alpha-D-ribose 1-phosphate + adenine. It catalyses the reaction cytidine + phosphate = cytosine + alpha-D-ribose 1-phosphate. It carries out the reaction guanosine + phosphate = alpha-D-ribose 1-phosphate + guanine. The enzyme catalyses inosine + phosphate = alpha-D-ribose 1-phosphate + hypoxanthine. The catalysed reaction is thymidine + phosphate = 2-deoxy-alpha-D-ribose 1-phosphate + thymine. It catalyses the reaction uridine + phosphate = alpha-D-ribose 1-phosphate + uracil. It carries out the reaction xanthosine + phosphate = alpha-D-ribose 1-phosphate + xanthine. Functionally, catalyzes the phosphorolysis of diverse nucleosides, yielding D-ribose 1-phosphate and the respective free bases. Can use uridine, adenosine, guanosine, cytidine, thymidine, inosine and xanthosine as substrates. Also catalyzes the reverse reactions. This is Pyrimidine/purine nucleoside phosphorylase from Shewanella sp. (strain MR-4).